The chain runs to 867 residues: Leucine--tRNA ligase (867 aa).

The short motif at 42–52 (PYPSGNLHMGH) is the 'HIGH' region element. The 'KMSKS' region signature appears at 625–629 (KMSKS). Residue lysine 628 participates in ATP binding.

This sequence belongs to the class-I aminoacyl-tRNA synthetase family.

It localises to the cytoplasm. The catalysed reaction is tRNA(Leu) + L-leucine + ATP = L-leucyl-tRNA(Leu) + AMP + diphosphate. This is Leucine--tRNA ligase from Blochmanniella floridana.